The sequence spans 657 residues: THO complex subunit 1 (657 aa).

At M1 the chain carries N-acetylmethionine. Residue S2 is modified to Phosphoserine. T4 is modified (phosphothreonine). Residue K31 forms a Glycyl lysine isopeptide (Lys-Gly) (interchain with G-Cter in SUMO2) linkage. K133 is modified (N6-acetyllysine). Residues 133 to 167 form a dock domain; interaction with THOC2 region; that stretch reads KNYLLRMCNDLLRRLSKSQNTVFCGRIQLFLARLF. The tract at residues 194–222 is disordered; that stretch reads QESTLGQKHTEDREEGMDVEEGEMGDEEA. Residues 206–222 show a composition bias toward acidic residues; sequence REEGMDVEEGEMGDEEA. Residues 227–397 form a dock domain; interaction with THOC2 region; sequence SIPIDYNLYR…WNSWKNEGCP (171 aa). At K300 the chain carries N6-acetyllysine. Residue K408 forms a Glycyl lysine isopeptide (Lys-Gly) (interchain with G-Cter in SUMO2) linkage. The short motif at 414–430 is the Nuclear localization signal element; sequence RKRTAPEDFLGKGPTKK. A disordered region spans residues 533-569; sequence LPPPSEEIKTGEDEDEEDNDALLKENESPDVRRDKPV. At S537 the chain carries Phosphoserine. T542 bears the Phosphothreonine mark. The segment covering 553 to 569 has biased composition (basic and acidic residues); it reads ALLKENESPDVRRDKPV. S560 carries the post-translational modification Phosphoserine. Residues 570–653 form the Death domain; that stretch reads TGEQIEVFAN…DLAESLTNDN (84 aa). A Glycyl lysine isopeptide (Lys-Gly) (interchain with G-Cter in SUMO2) cross-link involves residue K580. K595 participates in a covalent cross-link: Glycyl lysine isopeptide (Lys-Gly) (interchain with G-Cter in SUMO1); alternate. A Glycyl lysine isopeptide (Lys-Gly) (interchain with G-Cter in SUMO2); alternate cross-link involves residue K595.

This sequence belongs to the THOC1 family. As to quaternary structure, component of the THO subcomplex, which is composed of THOC1, THOC2, THOC3, THOC5, THOC6 and THOC7. The THO subcomplex interacts with DDX39B to form the THO-DDX39B complex which multimerizes into a 28-subunit tetrameric assembly. Component of the transcription/export (TREX) complex at least composed of ALYREF/THOC4, DDX39B, SARNP/CIP29, CHTOP and the THO subcomplex; in the complex interacts with THOC2, THOC5 and THOC7. TREX seems to have a dynamic structure involving ATP-dependent remodeling. Binds to the hypophosphorylated form of RB1. Interacts with RNA polymerase II. Interacts with LUZP4. Post-translationally, expression is altered specifically during apoptosis and is accompanied by the appearance of novel forms with smaller apparent molecular mass. Polyubiquitinated, leading to proteasomal degradation; probably involves NEDD4. As to expression, ubiquitous. Expressed in various cancer cell lines. Expressed at very low levels in normal breast epithelial cells and highly expressed in breast tumors. Expression is strongly associated with an aggressive phenotype of breast tumors and expression correlates with tumor size and the metastatic state of the tumor progression.

The protein localises to the nucleus speckle. The protein resides in the nucleus. It is found in the nucleoplasm. Its subcellular location is the nucleus matrix. It localises to the cytoplasm. Component of the THO subcomplex of the TREX complex which is thought to couple mRNA transcription, processing and nuclear export, and which specifically associates with spliced mRNA and not with unspliced pre-mRNA. Required for efficient export of polyadenylated RNA. The THOC1-THOC2-THOC3 core complex alone is sufficient to bind export factor NXF1-NXT1 and promote ATPase activity of DDX39B/UAP56. TREX is recruited to spliced mRNAs by a transcription-independent mechanism, binds to mRNA upstream of the exon-junction complex (EJC) and is recruited in a splicing- and cap-dependent manner to a region near the 5' end of the mRNA where it functions in mRNA export to the cytoplasm via the TAP/NXF1 pathway. Regulates transcriptional elongation of a subset of genes. Involved in genome stability by preventing co-transcriptional R-loop formation. May play a role in hair cell formation, hence may be involved in hearing. In terms of biological role, participates in an apoptotic pathway which is characterized by activation of caspase-6, increases in the expression of BAK1 and BCL2L1 and activation of NF-kappa-B. This pathway does not require p53/TP53, nor does the presence of p53/TP53 affect the efficiency of cell killing. Activates a G2/M cell cycle checkpoint prior to the onset of apoptosis. Apoptosis is inhibited by association with RB1. Its function is as follows. (Microbial infection) The TREX complex is essential for the export of Kaposi's sarcoma-associated herpesvirus (KSHV) intronless mRNAs and infectious virus production. The protein is THO complex subunit 1 (THOC1) of Homo sapiens (Human).